Reading from the N-terminus, the 350-residue chain is tRNA uridine(34) hydroxylase (350 aa).

Residues 146 to 240 enclose the Rhodanese domain; sequence DDPDALFIDM…YARKAREQGL (95 aa). Cys200 serves as the catalytic Cysteine persulfide intermediate.

Belongs to the TrhO family.

The enzyme catalyses uridine(34) in tRNA + AH2 + O2 = 5-hydroxyuridine(34) in tRNA + A + H2O. Its function is as follows. Catalyzes oxygen-dependent 5-hydroxyuridine (ho5U) modification at position 34 in tRNAs, the first step in 5-carboxymethoxyuridine (cmo5U) biosynthesis. May be part of an alternate pathway, which is able to bypass cmo5U biogenesis in a subset of tRNAs under aerobic conditions. This is tRNA uridine(34) hydroxylase from Escherichia coli O157:H7.